Reading from the N-terminus, the 188-residue chain is Probable nicotinate-nucleotide adenylyltransferase (188 aa).

This sequence belongs to the NadD family.

It carries out the reaction nicotinate beta-D-ribonucleotide + ATP + H(+) = deamido-NAD(+) + diphosphate. The protein operates within cofactor biosynthesis; NAD(+) biosynthesis; deamido-NAD(+) from nicotinate D-ribonucleotide: step 1/1. In terms of biological role, catalyzes the reversible adenylation of nicotinate mononucleotide (NaMN) to nicotinic acid adenine dinucleotide (NaAD). This is Probable nicotinate-nucleotide adenylyltransferase from Listeria welshimeri serovar 6b (strain ATCC 35897 / DSM 20650 / CCUG 15529 / CIP 8149 / NCTC 11857 / SLCC 5334 / V8).